Here is a 90-residue protein sequence, read N- to C-terminus: Auxin-responsive protein SAUR19 (90 aa).

The protein belongs to the ARG7 family. As to quaternary structure, interacts with and inhibits PP2C-D subfamily of type 2C phosphatases such as PP2C67/PP2C-D1, PP2C64/PP2C-D5 and PP2C46/PP2C-D6.

Its subcellular location is the cell membrane. Functionally, provide a mechanistic link between auxin and plasma membrane H(+)-ATPases (PM H(+)-ATPases, e.g. AHA1 and AHA2), and triggers PM H(+)-ATPases activity by promoting phosphorylation of their C-terminal autoinhibitory domain as a result of PP2C-D subfamily of type 2C phosphatases inhibition, thus leading to the acidification of the apoplast and the facilitation of solutes and water uptake to drive cell expansion. Prevents the apical hook maintenance of etiolated seedlings. Functions as positive effectors of cell expansion through modulation of auxin transport. The chain is Auxin-responsive protein SAUR19 from Arabidopsis thaliana (Mouse-ear cress).